Reading from the N-terminus, the 309-residue chain is Glycine--tRNA ligase alpha subunit (309 aa).

It belongs to the class-II aminoacyl-tRNA synthetase family. As to quaternary structure, tetramer of two alpha and two beta subunits.

The protein resides in the cytoplasm. The enzyme catalyses tRNA(Gly) + glycine + ATP = glycyl-tRNA(Gly) + AMP + diphosphate. The chain is Glycine--tRNA ligase alpha subunit from Anaeromyxobacter sp. (strain K).